A 203-amino-acid chain; its full sequence is Outer-membrane lipoprotein carrier protein (203 aa).

Residues 1-21 (MKKQLMTSCLFAAVLAAPAFA) form the signal peptide.

Belongs to the LolA family. Monomer.

It localises to the periplasm. Its function is as follows. Participates in the translocation of lipoproteins from the inner membrane to the outer membrane. Only forms a complex with a lipoprotein if the residue after the N-terminal Cys is not an aspartate (The Asp acts as a targeting signal to indicate that the lipoprotein should stay in the inner membrane). This chain is Outer-membrane lipoprotein carrier protein, found in Sodalis glossinidius (strain morsitans).